A 186-amino-acid chain; its full sequence is A-type ATP synthase subunit E (186 aa).

This sequence belongs to the V-ATPase E subunit family. As to quaternary structure, has multiple subunits with at least A(3), B(3), C, D, E, F, H, I and proteolipid K(x).

It is found in the cell membrane. Its function is as follows. Component of the A-type ATP synthase that produces ATP from ADP in the presence of a proton gradient across the membrane. The protein is A-type ATP synthase subunit E of Methanocella arvoryzae (strain DSM 22066 / NBRC 105507 / MRE50).